Here is a 228-residue protein sequence, read N- to C-terminus: Flagellar L-ring protein (228 aa).

Positions M1–S17 are cleaved as a signal peptide. C18 carries the N-palmitoyl cysteine lipid modification. Residue C18 is the site of S-diacylglycerol cysteine attachment.

The protein belongs to the FlgH family. As to quaternary structure, the basal body constitutes a major portion of the flagellar organelle and consists of four rings (L,P,S, and M) mounted on a central rod.

The protein localises to the cell membrane. Its subcellular location is the bacterial flagellum basal body. Assembles around the rod to form the L-ring and probably protects the motor/basal body from shearing forces during rotation. The chain is Flagellar L-ring protein from Wigglesworthia glossinidia brevipalpis.